A 349-amino-acid polypeptide reads, in one-letter code: UPF0324 inner membrane protein YeiH (349 aa).

Residues 1 to 12 are Periplasmic-facing; sequence MTELTLQNHCRT. A helical transmembrane segment spans residues 13 to 35; the sequence is MWHFIPGLALSAVITGVALWGGA. At 36–38 the chain is on the cytoplasmic side; the sequence is IPA. The chain crosses the membrane as a helical span at residues 39–61; sequence VAGAGFSALTLAILLGMVIGNTI. Residues 62–99 lie on the Periplasmic side of the membrane; it reads YPQIWKQCDGGVLFAKQHLLRLGIILYGFRLTFSQIAD. A helical membrane pass occupies residues 100-122; sequence VGISGIVIDVLTLSSTFMLACFL. At 123 to 131 the chain is on the cytoplasmic side; sequence GQKVFGLDR. Residues 132–151 form a helical membrane-spanning segment; sequence HTSWLIGAGSSICGAAAVLA. Over 152–162 the chain is Periplasmic; it reads TEPVVKAEASK. Residues 163–185 form a helical membrane-spanning segment; the sequence is VTVAVATVVIFGTIAIFLYPAMY. At 186-261 the chain is on the cytoplasmic side; it reads PLLAHWFSPE…SPATGAEKSK (76 aa). The helical transmembrane segment at 262–284 threads the bilayer; that stretch reads ITIPWFAIFFIVVAIFNSFHLLP. Topologically, residues 285-290 are periplasmic; the sequence is KAVVDM. Residues 291–313 form a helical membrane-spanning segment; the sequence is LVTLDTVLLAMAMAALGLTTHVS. The Cytoplasmic segment spans residues 314 to 322; it reads ALKKAGAKP. A helical membrane pass occupies residues 323 to 345; sequence LLMALALFAWLIIGGGAINVLIH. Over 346–349 the chain is Periplasmic; that stretch reads SLIA.

Belongs to the UPF0324 family.

It is found in the cell inner membrane. The protein is UPF0324 inner membrane protein YeiH (yeiH) of Salmonella typhimurium (strain LT2 / SGSC1412 / ATCC 700720).